Consider the following 153-residue polypeptide: Ubiquitin-conjugating enzyme E2 35 (153 aa).

The UBC core domain maps to 5–151 (NLPRRIIKET…AKEWTRLYAS (147 aa)). Cysteine 89 acts as the Glycyl thioester intermediate in catalysis.

It belongs to the ubiquitin-conjugating enzyme family. In terms of assembly, interacts with yeast and human Mms2, with the RING domain of RGLG2 and with UEV1A, UEV1B, UEV1C and UEV1D. Ubiquitously expressed at low level. Mainly expressed in the vasculature.

It catalyses the reaction S-ubiquitinyl-[E1 ubiquitin-activating enzyme]-L-cysteine + [E2 ubiquitin-conjugating enzyme]-L-cysteine = [E1 ubiquitin-activating enzyme]-L-cysteine + S-ubiquitinyl-[E2 ubiquitin-conjugating enzyme]-L-cysteine.. It participates in protein modification; protein ubiquitination. In terms of biological role, catalyzes the synthesis of non-canonical poly-ubiquitin chains that are linked through 'Lys-63'. This type of poly-ubiquitination does not lead to protein degradation by the proteasome. Mediates transcriptional activation of target genes. Required for postreplication repair of UV-damaged DNA and for adapting root developmental programs to suboptimal availability of iron. The sequence is that of Ubiquitin-conjugating enzyme E2 35 (UBC35) from Arabidopsis thaliana (Mouse-ear cress).